The primary structure comprises 260 residues: Thiamine thiazole synthase (260 aa).

NAD(+)-binding positions include Ala-36, 55-56, Gly-63, and 154-156; these read EQ and HVD. 2 residues coordinate Fe cation: Asp-156 and His-171. Met-224 is an NAD(+) binding site. Glycine is bound at residue Arg-234.

Belongs to the THI4 family. Homooctamer; tetramer of dimers. Fe(2+) serves as cofactor.

It carries out the reaction hydrogen sulfide + glycine + NAD(+) = ADP-5-ethyl-4-methylthiazole-2-carboxylate + nicotinamide + 3 H2O + H(+). It functions in the pathway cofactor biosynthesis; thiamine diphosphate biosynthesis. Functionally, involved in the biosynthesis of the thiazole moiety of thiamine. Catalyzes the conversion of NAD and glycine to adenosine diphosphate 5-(2-hydroxyethyl)-4-methylthiazole-2-carboxylate (ADT), an adenylated thiazole intermediate, using free sulfide as a source of sulfur. In Methanosarcina acetivorans (strain ATCC 35395 / DSM 2834 / JCM 12185 / C2A), this protein is Thiamine thiazole synthase.